The following is a 763-amino-acid chain: MDRGRVLEQLLPELTGLLSLLDHEYLSDTTLEKKMAVASILQSLQPLPAKEVSYLYVNTADLHSGPSFVESLFEEFDCDLSGLQDMPEDEAESCKAASPEPAKSPSLRHTADLPPPLPNRPPPEDYYEEALPLGPGKSPEYISSHNGCSPAHSLMDGYYEDADSSYPATRMNGELKNSYNDSDAMSSSYESYDEEEEEGKGPQPTHQWPSEEASMHLVRDCRICAFLLRKKRFGQWAKQLTVIKEDQLLCYKSSKDRQPHLRLALDVCSVIYVPKDSRHKRHELRFAQGATEVLVLALQSREQAEEWLKVIREVSKPVGGTEGADVPRSPVLLCKADLDKRLSQEKQTSDSDSLGMGDSCSTLGREHGKGKKSSLSELKGSMSRAAGRKITRIISFSKKKALADDLQASSTEEVPCCGYLNVLVNHGWKERWCRLKCNTLYFHKDRTDLRTHVNAIALRGCEVAPGFGPRHPFAFRILHNRQEVAILEASCSEDMGRWLGLLLVEMGSKVTPEALHYDYVDVETLTSIVSAGRNSFLYARSCQDQWPEPRVYDDVPYEKMQDEEPERPPGAQVKRHASTCSEKSHRVDPQVKVKRHASSAHQYKYGKNRAEEDARRYLVEKEKLEKEKETIRTELMALRQEKRELKEAIRNNPGAKLKALEEALATLEAQCRAKEEHRIDLELRLVTVKERLQQSLAGGPALGLSVNSKIKSGETANKPQNNVPEQPLPVNCVSELRKRSPSIINSNQGRVLQKAKEWEMKKT.

The tract at residues Leu83–Lys137 is disordered. Ser98, Ser104, and Ser153 each carry phosphoserine. The interval Thr169–Ser210 is disordered. Residues Leu175–Met185 are compositionally biased toward polar residues. The 97-residue stretch at Asp220–Lys316 folds into the PH 1 domain. Phosphoserine occurs at positions 329 and 343. The tract at residues Ser343 to Gly380 is disordered. Residues Glu413 to Gly507 enclose the PH 2 domain. Tyr552 carries the post-translational modification Phosphotyrosine. The segment at Gln561–Lys604 is disordered. Residues Glu582–Val591 are compositionally biased toward basic and acidic residues. A coiled-coil region spans residues Gly606–Gln694. Over residues Ser712–Pro724 the composition is skewed to polar residues. Residues Ser712–Thr763 are disordered. The residue at position 742 (Ser742) is a Phosphoserine. The span at Lys754–Thr763 shows a compositional bias: basic and acidic residues.

In terms of assembly, interacts with CTTN.

The protein resides in the cytoplasm. The protein localises to the cell projection. It is found in the podosome. It localises to the invadopodium. Its subcellular location is the cytoskeleton. The protein resides in the stress fiber. May be involved in podosome and invadosome formation. This chain is Actin filament-associated protein 1-like 1 (AFAP1L1), found in Bos taurus (Bovine).